A 1637-amino-acid chain; its full sequence is Stress response protein NST1 (1637 aa).

Positions 1–17 are enriched in polar residues; sequence MSNRGNLNLNLPPSSGK. 10 disordered regions span residues 1 to 155, 221 to 252, 442 to 494, 504 to 523, 681 to 734, 746 to 825, 871 to 1036, 1049 to 1075, 1176 to 1299, and 1512 to 1534; these read MSNR…EITN, HQAS…HASH, LKMN…SQQL, KNNL…PLQH, KTPY…EIDD, QHHH…EEEK, AKRE…SKHV, SKQN…EENP, NSSQ…GAII, and YTQQ…QYPL. Positions 24-33 are enriched in basic and acidic residues; sequence VHFELSKEKN. Composition is skewed to low complexity over residues 34-53 and 64-113; these read NSTN…SNNT and NDNN…QQQS. Positions 124 to 134 are enriched in basic residues; sequence AKKRKKKKSKK. The segment covering 135–155 has biased composition (low complexity); that stretch reads SSNNNGNNSNTNSNSNSEITN. Positions 446 to 470 are enriched in low complexity; it reads QRQQSQSQSQSQSQQQRDVQTAQSQ. Residues 471 to 487 show a composition bias toward polar residues; sequence VLSKDSSLKNANTSMNK. Polar residues predominate over residues 692 to 706; it reads PAATSQDREQQVQPN. The span at 717–734 shows a compositional bias: basic and acidic residues; the sequence is DHEHEHEHEHEHEHEIDD. Residues 754-808 are compositionally biased toward acidic residues; it reads EEYDEEDEEDDEEYEYGDDEEEEDEEDEEEGEDEELEEVVEDDVDEEILDDEEEF. A coiled-coil region spans residues 855–1023; it reads KDNTRKLFEE…KQLEKEAAVS (169 aa). Composition is skewed to basic and acidic residues over residues 871-887 and 896-1021; these read AKRE…EKAK and AKEE…KEAA. The span at 1049–1063 shows a compositional bias: polar residues; sequence SKQNQAQNGNQSHLP. A compositionally biased stretch (low complexity) spans 1176-1199; sequence NSSQGSPWTTNSTLSSNLGSTGLS. The segment covering 1201–1228 has biased composition (polar residues); it reads GQGQTVSGVNTNLPSSIGITSGGASQIF. Residues 1234–1257 show a composition bias toward low complexity; that stretch reads PQLQPHQPQQQQQQQQQQQQQQQQ. Residues 1258 to 1267 are compositionally biased toward polar residues; it reads NYFSPFNSFS. Low complexity-rich tracts occupy residues 1282 to 1299 and 1514 to 1534; these read TTNI…GAII and QQQQ…QYPL.

Belongs to the NST1 family.

Its subcellular location is the cytoplasm. Functionally, may act as a negative regulator of salt tolerance. The protein is Stress response protein NST1 (NST1) of Lodderomyces elongisporus (strain ATCC 11503 / CBS 2605 / JCM 1781 / NBRC 1676 / NRRL YB-4239) (Yeast).